A 976-amino-acid chain; its full sequence is Synaptonemal complex protein 1 (976 aa).

Residues 101-111 (GLSRVYSKLYK) carry the Mediates head to head self-assembly of N-terminal ends motif. A Nuclear localization signal motif is present at residues 117–120 (KKWK). The interval 206–362 (ETRQVYMDLN…CQLTEEKETQ (157 aa)) is interaction with SYCE3. Coiled-coil stretches lie at residues 211–316 (YMDL…SIEK), 391–439 (LRTE…LKKV), 499–685 (VKDL…VEKA), and 739–798 (EQEQ…KTQT). The tract at residues 676–770 (ENLLEEVEKA…LSVKKQLEIE (95 aa)) is required for pH-induced assembly of C-terminal ends into antiparallel tetramers. The short motif at 679–682 (LEEV) is the Nuclear localization signal element. Positions 784 to 976 (NTATLKEKKD…KLKEAEKLFV (193 aa)) are DNA-binding. The Nuclear localization signal motif lies at 880 to 883 (KKRK).

Structural component of synaptonemal complexes. Homotetramer that consists of an N-terminal four-helical bundle that bifurcates into two elongated C-terminal dimeric coiled coils. This tetrameric building block potentially self-assembles into a supramolecular zipper-like lattice to mediate meiotic chromosome synapsis. Self-assembly is likely initiated by local proton density at chromosome axis, which is predicted to trigger antiparallel back to back assembly of adjacent C-terminal ends into tetrameric structures that anchor to chromosomal DNA. Then the N-terminal ends are predicted to undergo cooperative antiparallel head to head assembly at the midline of synaptonemal complexes central element to form a zipper-like lattice between properly aligned homologous chromosomes. The nascent synapsis generated by SYCP1 is stabilized through interaction with central element proteins SYCE1 and SYCE2. Interacts (via tetrameric core) with SYCE3; the interaction remodels SYCP1 homotetramers to 2:1 heterotrimers with SYCE3. SYCP1/SYCE3 heterotrimers form lattice assemblies as part of the mature synaptonemal complex via both lateral and head-to-head interactions. Forms a complex with EWSR1, PRDM9, SYCP3 and REC8; complex formation is dependent of phosphorylated form of REC8 and requires PRDM9 bound to hotspot DNA; EWSR1 joins PRDM9 with the chromosomal axis through REC8. Interacts with SPO16. In terms of tissue distribution, testis.

It localises to the nucleus. Its subcellular location is the chromosome. The protein resides in the centromere. Its function is as follows. Major component of the transverse filaments of synaptonemal complexes, formed between homologous chromosomes during meiotic prophase. Required for normal assembly of the central element of the synaptonemal complexes. Required for normal centromere pairing during meiosis. Required for normal meiotic chromosome synapsis during oocyte and spermatocyte development and for normal male and female fertility. The polypeptide is Synaptonemal complex protein 1 (Homo sapiens (Human)).